The following is a 274-amino-acid chain: Glutamate racemase (274 aa).

Residues 9-10 (DS) and 41-42 (YG) each bind substrate. Catalysis depends on Cys73, which acts as the Proton donor/acceptor. 74-75 (NT) contacts substrate. Cys183 functions as the Proton donor/acceptor in the catalytic mechanism. Residue 184–185 (TH) participates in substrate binding.

Belongs to the aspartate/glutamate racemases family.

The catalysed reaction is L-glutamate = D-glutamate. Its pathway is cell wall biogenesis; peptidoglycan biosynthesis. Its function is as follows. Provides the (R)-glutamate required for cell wall biosynthesis. The chain is Glutamate racemase from Shewanella baltica (strain OS195).